The sequence spans 150 residues: Urease subunit beta (150 aa).

Positions 122–140 (GAVVGDSPAATPGTTGATG) are enriched in low complexity. The tract at residues 122–150 (GAVVGDSPAATPGTTGATGDLPGYLGEGS) is disordered.

The protein belongs to the urease beta subunit family. Heterotrimer of UreA (gamma), UreB (beta) and UreC (alpha) subunits. Three heterotrimers associate to form the active enzyme.

It localises to the cytoplasm. The enzyme catalyses urea + 2 H2O + H(+) = hydrogencarbonate + 2 NH4(+). Its pathway is nitrogen metabolism; urea degradation; CO(2) and NH(3) from urea (urease route): step 1/1. The polypeptide is Urease subunit beta (Frankia alni (strain DSM 45986 / CECT 9034 / ACN14a)).